Consider the following 132-residue polypeptide: Small ribosomal subunit protein uS8 (132 aa).

Belongs to the universal ribosomal protein uS8 family. Part of the 30S ribosomal subunit. Contacts proteins S5 and S12.

Its function is as follows. One of the primary rRNA binding proteins, it binds directly to 16S rRNA central domain where it helps coordinate assembly of the platform of the 30S subunit. In Rickettsia felis (strain ATCC VR-1525 / URRWXCal2) (Rickettsia azadi), this protein is Small ribosomal subunit protein uS8.